A 735-amino-acid chain; its full sequence is Catalase-peroxidase (735 aa).

2 stretches are compositionally biased toward polar residues: residues 1 to 10 (MENQNRQNAA) and 17 to 26 (SVTNQSSNRT). Residues 1–30 (MENQNRQNAAQCPFHGSVTNQSSNRTTNKD) are disordered. A cross-link (tryptophyl-tyrosyl-methioninium (Trp-Tyr) (with M-249)) is located at residues 100–223 (WHSAGTYRIG…LAAVQMGLIY (124 aa)). His101 (proton acceptor) is an active-site residue. Residues 223–249 (YVNPEGPDGKPDPKAAARDIRETFRRM) constitute a cross-link (tryptophyl-tyrosyl-methioninium (Tyr-Met) (with W-100)). Position 264 (His264) interacts with heme b.

The protein belongs to the peroxidase family. Peroxidase/catalase subfamily. As to quaternary structure, homodimer or homotetramer. The cofactor is heme b. In terms of processing, formation of the three residue Trp-Tyr-Met cross-link is important for the catalase, but not the peroxidase activity of the enzyme.

The enzyme catalyses H2O2 + AH2 = A + 2 H2O. It catalyses the reaction 2 H2O2 = O2 + 2 H2O. Bifunctional enzyme with both catalase and broad-spectrum peroxidase activity. Also displays NADH oxidase, INH lyase and isonicotinoyl-NAD synthase activities. This Geobacillus stearothermophilus (Bacillus stearothermophilus) protein is Catalase-peroxidase.